The sequence spans 428 residues: MQILPIFFPLLITSLHAIPRGRRAVRNRNEGDINSLVGVGQYLYQGDIAVVKSRARRAVIRQKHKKWKLPMPYSFDRNFPSRSRQRVLEAMQFWSEKTCVTFHENRYVYPHVSIFEGNGCWSFVGKQPSLREQSLSLERSCTDHTFVVAHEIAHTLGFYHEHARGDRDQFISIDYSNVNPNLTFAFAKESEKQLDHQEAAYEYGSVMHYSVDQFAVNTNRPVIYARDQKFAQAMGNRMRATFQDVSRMNVLYNCHERCANTLNRCQQGGYPAPSDCSQCVCPDGFGGNFCETIEAHSVGQKDNSDCGGVLWASETSQTFYGAVRTRVHSNSVLPTPEHCFWHIRASQGKSIEIQIKNIISPCSMSCSFNALELKLSNFTMTGPRFCCDEHIYNRYSQPKVFQSEGPLAVIGAYARYDYLDFNIEYRAV.

The signal sequence occupies residues 1–17; that stretch reads MQILPIFFPLLITSLHA. Positions 18-57 are excised as a propeptide; it reads IPRGRRAVRNRNEGDINSLVGVGQYLYQGDIAVVKSRARR. One can recognise a Peptidase M12A domain in the interval 58-255; sequence AVIRQKHKKW…SRMNVLYNCH (198 aa). 6 disulfides stabilise this stretch: Cys-99/Cys-254, Cys-120/Cys-141, Cys-258/Cys-276, Cys-281/Cys-290, Cys-306/Cys-339, and Cys-366/Cys-386. Zn(2+) is bound at residue His-150. Residue Glu-151 is part of the active site. Zn(2+) contacts are provided by His-154 and His-160. Residue Asn-181 is glycosylated (N-linked (GlcNAc...) asparagine). In terms of domain architecture, EGF-like spans 250–291; that stretch reads VLYNCHERCANTLNRCQQGGYPAPSDCSQCVCPDGFGGNFCE. The CUB domain maps to 306–428; that stretch reads CGGVLWASET…LDFNIEYRAV (123 aa). The N-linked (GlcNAc...) asparagine glycan is linked to Asn-377.

It depends on Zn(2+) as a cofactor.

Its subcellular location is the secreted. Its function is as follows. Metalloprotease. The sequence is that of Zinc metalloproteinase nas-27 (nas-27) from Caenorhabditis elegans.